Consider the following 257-residue polypeptide: NAD-capped RNA hydrolase NudC (257 aa).

Residues Lys-25 and Arg-69 each coordinate substrate. Zn(2+) contacts are provided by Cys-98 and Cys-101. Glu-111 is a substrate binding site. Zn(2+)-binding residues include Cys-116 and Cys-119. Tyr-124 provides a ligand contact to substrate. Positions 125–248 (PQIAPCIIVA…TVARRLIEDT (124 aa)) constitute a Nudix hydrolase domain. Ala-158, Glu-174, and Glu-178 together coordinate a divalent metal cation. The Nudix box signature appears at 159–180 (GFVEVGETLEQAVAREVMEESG). 192–199 (QPWPFPQS) is a binding site for substrate. Glu-219 provides a ligand contact to a divalent metal cation. Position 241 (Ala-241) interacts with substrate.

The protein belongs to the Nudix hydrolase family. NudC subfamily. Homodimer. The cofactor is Mg(2+). Requires Mn(2+) as cofactor. It depends on Zn(2+) as a cofactor.

The catalysed reaction is a 5'-end NAD(+)-phospho-ribonucleoside in mRNA + H2O = a 5'-end phospho-adenosine-phospho-ribonucleoside in mRNA + beta-nicotinamide D-ribonucleotide + 2 H(+). It catalyses the reaction NAD(+) + H2O = beta-nicotinamide D-ribonucleotide + AMP + 2 H(+). The enzyme catalyses NADH + H2O = reduced beta-nicotinamide D-ribonucleotide + AMP + 2 H(+). Functionally, mRNA decapping enzyme that specifically removes the nicotinamide adenine dinucleotide (NAD) cap from a subset of mRNAs by hydrolyzing the diphosphate linkage to produce nicotinamide mononucleotide (NMN) and 5' monophosphate mRNA. The NAD-cap is present at the 5'-end of some mRNAs and stabilizes RNA against 5'-processing. Has preference for mRNAs with a 5'-end purine. Catalyzes the hydrolysis of a broad range of dinucleotide pyrophosphates. The sequence is that of NAD-capped RNA hydrolase NudC from Escherichia coli (strain 55989 / EAEC).